We begin with the raw amino-acid sequence, 83 residues long: Large ribosomal subunit protein bL31B (83 aa).

The protein belongs to the bacterial ribosomal protein bL31 family. Type B subfamily. As to quaternary structure, part of the 50S ribosomal subunit.

This chain is Large ribosomal subunit protein bL31B, found in Lactobacillus gasseri (strain ATCC 33323 / DSM 20243 / BCRC 14619 / CIP 102991 / JCM 1131 / KCTC 3163 / NCIMB 11718 / NCTC 13722 / AM63).